Consider the following 239-residue polypeptide: tRNA (guanine-N(7)-)-methyltransferase (239 aa).

Glu-69, Glu-94, Asp-121, and Asp-144 together coordinate S-adenosyl-L-methionine. Asp-144 is a catalytic residue. Lys-148 contributes to the substrate binding site. The tract at residues 150-155 is interaction with RNA; the sequence is RHNKRR. Substrate contacts are provided by residues Asp-180 and 217-220; that span reads TKFE.

This sequence belongs to the class I-like SAM-binding methyltransferase superfamily. TrmB family. In terms of assembly, monomer.

It catalyses the reaction guanosine(46) in tRNA + S-adenosyl-L-methionine = N(7)-methylguanosine(46) in tRNA + S-adenosyl-L-homocysteine. It functions in the pathway tRNA modification; N(7)-methylguanine-tRNA biosynthesis. In terms of biological role, catalyzes the formation of N(7)-methylguanine at position 46 (m7G46) in tRNA. The protein is tRNA (guanine-N(7)-)-methyltransferase of Shigella boydii serotype 4 (strain Sb227).